The following is a 609-amino-acid chain: Glutamine--fructose-6-phosphate aminotransferase [isomerizing] (609 aa).

The active-site Nucleophile; for GATase activity is Cys-2. A Glutamine amidotransferase type-2 domain is found at 2–217; the sequence is CGIVGAIAGR…DGDTAEIRRD (216 aa). 2 consecutive SIS domains span residues 285 to 425 and 458 to 599; these read AESV…LRGA and WAEC…VDKP. The active-site For Fru-6P isomerization activity is Lys-604.

As to quaternary structure, homodimer.

The protein resides in the cytoplasm. The enzyme catalyses D-fructose 6-phosphate + L-glutamine = D-glucosamine 6-phosphate + L-glutamate. Its function is as follows. Catalyzes the first step in hexosamine metabolism, converting fructose-6P into glucosamine-6P using glutamine as a nitrogen source. In Xylella fastidiosa (strain Temecula1 / ATCC 700964), this protein is Glutamine--fructose-6-phosphate aminotransferase [isomerizing].